The sequence spans 393 residues: MTVPDIRKDFMIVNMGPHHPSMHGVLRLIVTLDGEDVIDCEPVLGYLHRGMEKIAENRTIIQYLPYVTRWDYLATMFTEAITVNAPEQLGNIQVPKRASYIRVIMLELSRIASHLLWLGPFMADIGAQTPFFYIFRERELLYDLFEAATGMRMMHNYFRIGGVAADLPHGWIDKCLDFCDYSLTGVVEYQKLITRNPIFLERVEGVGIIGGEEAINWGLSGPMLRASGIQWDLRKIDHYECYDEFDWEVQWQKEGDSLARYLVRISEMAESIKIIQQVLEGIPGGPYENLEVRRFDKARDSEWNDFEYRFISKKPSPTFELSKQELYVRVEAPKGELGIFLIGDNSVFPWRWKIRPPGFINLQILPQLVKRMKLADIMTILGSIDIIMGEVDR.

Belongs to the complex I 49 kDa subunit family. NDH is composed of at least 16 different subunits, 5 of which are encoded in the nucleus.

Its subcellular location is the plastid. The protein resides in the chloroplast thylakoid membrane. The enzyme catalyses a plastoquinone + NADH + (n+1) H(+)(in) = a plastoquinol + NAD(+) + n H(+)(out). It carries out the reaction a plastoquinone + NADPH + (n+1) H(+)(in) = a plastoquinol + NADP(+) + n H(+)(out). In terms of biological role, NDH shuttles electrons from NAD(P)H:plastoquinone, via FMN and iron-sulfur (Fe-S) centers, to quinones in the photosynthetic chain and possibly in a chloroplast respiratory chain. The immediate electron acceptor for the enzyme in this species is believed to be plastoquinone. Couples the redox reaction to proton translocation, and thus conserves the redox energy in a proton gradient. The chain is NAD(P)H-quinone oxidoreductase subunit H, chloroplastic from Liriodendron tulipifera (Tuliptree).